The following is an 89-amino-acid chain: Small ribosomal subunit protein uS15 (89 aa).

The span at 1-21 (MAITQERKNQLISEFKTHESD) shows a compositional bias: basic and acidic residues. Positions 1 to 23 (MAITQERKNQLISEFKTHESDTG) are disordered.

It belongs to the universal ribosomal protein uS15 family. In terms of assembly, part of the 30S ribosomal subunit. Forms a bridge to the 50S subunit in the 70S ribosome, contacting the 23S rRNA.

Its function is as follows. One of the primary rRNA binding proteins, it binds directly to 16S rRNA where it helps nucleate assembly of the platform of the 30S subunit by binding and bridging several RNA helices of the 16S rRNA. Functionally, forms an intersubunit bridge (bridge B4) with the 23S rRNA of the 50S subunit in the ribosome. The polypeptide is Small ribosomal subunit protein uS15 (Bacillus velezensis (strain DSM 23117 / BGSC 10A6 / LMG 26770 / FZB42) (Bacillus amyloliquefaciens subsp. plantarum)).